The primary structure comprises 132 residues: RING-H2 finger protein ATL39 (132 aa).

The helical transmembrane segment at 10–30 threads the bilayer; it reads TIVFAFASIGFIAFYIINYYI. An RING-type; atypical zinc finger spans residues 85–127; sequence CVVCLNEFKDDETLRLVPPCVHVFHADCVDIWLSHSSTCPICR.

This sequence belongs to the RING-type zinc finger family. ATL subfamily.

The protein localises to the membrane. It catalyses the reaction S-ubiquitinyl-[E2 ubiquitin-conjugating enzyme]-L-cysteine + [acceptor protein]-L-lysine = [E2 ubiquitin-conjugating enzyme]-L-cysteine + N(6)-ubiquitinyl-[acceptor protein]-L-lysine.. Its pathway is protein modification; protein ubiquitination. This is RING-H2 finger protein ATL39 (ATL39) from Arabidopsis thaliana (Mouse-ear cress).